Consider the following 216-residue polypeptide: ATP-dependent Clp protease proteolytic subunit (216 aa).

The active-site Nucleophile is the Ser-109. His-134 is a catalytic residue.

It belongs to the peptidase S14 family. In terms of assembly, fourteen ClpP subunits assemble into 2 heptameric rings which stack back to back to give a disk-like structure with a central cavity, resembling the structure of eukaryotic proteasomes.

It localises to the cytoplasm. It carries out the reaction Hydrolysis of proteins to small peptides in the presence of ATP and magnesium. alpha-casein is the usual test substrate. In the absence of ATP, only oligopeptides shorter than five residues are hydrolyzed (such as succinyl-Leu-Tyr-|-NHMec, and Leu-Tyr-Leu-|-Tyr-Trp, in which cleavage of the -Tyr-|-Leu- and -Tyr-|-Trp bonds also occurs).. Functionally, cleaves peptides in various proteins in a process that requires ATP hydrolysis. Has a chymotrypsin-like activity. Plays a major role in the degradation of misfolded proteins. This is ATP-dependent Clp protease proteolytic subunit from Rhodospirillum rubrum (strain ATCC 11170 / ATH 1.1.1 / DSM 467 / LMG 4362 / NCIMB 8255 / S1).